A 100-amino-acid chain; its full sequence is Large ribosomal subunit protein uL23 (100 aa).

This sequence belongs to the universal ribosomal protein uL23 family. As to quaternary structure, part of the 50S ribosomal subunit. Contacts protein L29, and trigger factor when it is bound to the ribosome.

Functionally, one of the early assembly proteins it binds 23S rRNA. One of the proteins that surrounds the polypeptide exit tunnel on the outside of the ribosome. Forms the main docking site for trigger factor binding to the ribosome. The sequence is that of Large ribosomal subunit protein uL23 from Yersinia pestis bv. Antiqua (strain Antiqua).